The following is a 162-amino-acid chain: 2-amino-4-hydroxy-6-hydroxymethyldihydropteridine pyrophosphokinase (162 aa).

Belongs to the HPPK family.

It carries out the reaction 6-hydroxymethyl-7,8-dihydropterin + ATP = (7,8-dihydropterin-6-yl)methyl diphosphate + AMP + H(+). It participates in cofactor biosynthesis; tetrahydrofolate biosynthesis; 2-amino-4-hydroxy-6-hydroxymethyl-7,8-dihydropteridine diphosphate from 7,8-dihydroneopterin triphosphate: step 4/4. Catalyzes the transfer of pyrophosphate from adenosine triphosphate (ATP) to 6-hydroxymethyl-7,8-dihydropterin, an enzymatic step in folate biosynthesis pathway. In Streptococcus pyogenes serotype M3 (strain ATCC BAA-595 / MGAS315), this protein is 2-amino-4-hydroxy-6-hydroxymethyldihydropteridine pyrophosphokinase (folK).